Reading from the N-terminus, the 263-residue chain is Putative steroid dehydrogenase 4 (263 aa).

Catalysis depends on tyrosine 154, which acts as the Proton acceptor.

The protein belongs to the short-chain dehydrogenases/reductases (SDR) family. 17-beta-HSD 3 subfamily.

The polypeptide is Putative steroid dehydrogenase 4 (stdh-4) (Caenorhabditis elegans).